Reading from the N-terminus, the 237-residue chain is NAD-dependent protein deacetylase (237 aa).

One can recognise a Deacetylase sirtuin-type domain in the interval 1-237 (MQDITQAEAI…TIFAELTIKE (237 aa)). 7 residues coordinate NAD(+): alanine 25, threonine 29, arginine 37, glutamine 100, isoleucine 102, aspartate 103, and histidine 118. The nicotinamide site is built by isoleucine 102 and aspartate 103. The active-site Proton acceptor is the histidine 118. Cysteine 126, cysteine 129, histidine 144, and cysteine 147 together coordinate Zn(2+). NAD(+) is bound by residues threonine 185, serine 186, and asparagine 209.

Belongs to the sirtuin family. Class U subfamily.

It localises to the cytoplasm. The enzyme catalyses N(6)-acetyl-L-lysyl-[protein] + NAD(+) + H2O = 2''-O-acetyl-ADP-D-ribose + nicotinamide + L-lysyl-[protein]. NAD-dependent protein deacetylase which modulates the activities of several enzymes which are inactive in their acetylated form. The protein is NAD-dependent protein deacetylase of Enterococcus faecalis (strain ATCC 700802 / V583).